The primary structure comprises 159 residues: Phosphopantetheine adenylyltransferase (159 aa).

Thr-10 lines the substrate pocket. ATP is bound by residues 10–11 (TF) and His-18. Residues Lys-42, Leu-74, and Arg-88 each contribute to the substrate site. Residues 89–91 (GLR), Glu-99, and 124–130 (FAYVSSS) contribute to the ATP site.

The protein belongs to the bacterial CoaD family. In terms of assembly, homohexamer. Mg(2+) serves as cofactor.

Its subcellular location is the cytoplasm. The enzyme catalyses (R)-4'-phosphopantetheine + ATP + H(+) = 3'-dephospho-CoA + diphosphate. The protein operates within cofactor biosynthesis; coenzyme A biosynthesis; CoA from (R)-pantothenate: step 4/5. Its function is as follows. Reversibly transfers an adenylyl group from ATP to 4'-phosphopantetheine, yielding dephospho-CoA (dPCoA) and pyrophosphate. The polypeptide is Phosphopantetheine adenylyltransferase (Thioalkalivibrio sulfidiphilus (strain HL-EbGR7)).